Reading from the N-terminus, the 318-residue chain is Acetyl-coenzyme A carboxylase carboxyl transferase subunit alpha (318 aa).

The region spanning 31–292 (DLIKEVSALE…KDAILRQLEL (262 aa)) is the CoA carboxyltransferase C-terminal domain.

The protein belongs to the AccA family. Acetyl-CoA carboxylase is a heterohexamer composed of biotin carboxyl carrier protein (AccB), biotin carboxylase (AccC) and two subunits each of ACCase subunit alpha (AccA) and ACCase subunit beta (AccD).

The protein resides in the cytoplasm. It carries out the reaction N(6)-carboxybiotinyl-L-lysyl-[protein] + acetyl-CoA = N(6)-biotinyl-L-lysyl-[protein] + malonyl-CoA. It participates in lipid metabolism; malonyl-CoA biosynthesis; malonyl-CoA from acetyl-CoA: step 1/1. Component of the acetyl coenzyme A carboxylase (ACC) complex. First, biotin carboxylase catalyzes the carboxylation of biotin on its carrier protein (BCCP) and then the CO(2) group is transferred by the carboxyltransferase to acetyl-CoA to form malonyl-CoA. The protein is Acetyl-coenzyme A carboxylase carboxyl transferase subunit alpha of Hydrogenovibrio crunogenus (strain DSM 25203 / XCL-2) (Thiomicrospira crunogena).